The sequence spans 197 residues: MSASRFIKCVTVGDGAVGKTCLLISYTSNTFPTDYVPTVFDNFSANVVVNGATVNLGLWDTAGQEDYNRLRPLSYRGADVFILAFSLISKASYENVSKKWIPELKHYAPGVPIVLVGTKLDLRDDKQFFIDHPGAVPITTVQGEELKKLIGAPAYIECSSKSQENVKGVFDAAIRVVLQPPKQKKKKNKAQKACSIL.

13–20 (GDGAVGKT) contributes to the GTP binding site. The short motif at 35–43 (YVPTVFDNF) is the Effector region element. GTP-binding positions include 60–64 (DTAGQ) and 118–121 (TKLD). Residue Ser-160 participates in GDP binding. Position 194 is a cysteine methyl ester (Cys-194). A lipid anchor (S-geranylgeranyl cysteine) is attached at Cys-194. A propeptide spans 195-197 (SIL) (removed in mature form).

This sequence belongs to the small GTPase superfamily. Rho family. As to quaternary structure, interacts with SPK1. Ubiquitous. Preferentially expressed in mature pollen and pollen tubes.

The protein localises to the cytoplasm. It localises to the membrane. Its function is as follows. May be involved in cell polarity control during the actin-dependent tip growth of pollen tubes. Functionally, inactive GDP-bound Rho GTPases reside in the cytosol, are found in a complex with Rho GDP-dissociation inhibitors (Rho GDIs), and are released from the GDI protein in order to translocate to membranes upon activation. This is Rac-like GTP-binding protein ARAC6 (ARAC6) from Arabidopsis thaliana (Mouse-ear cress).